The primary structure comprises 498 residues: Glycerol kinase (498 aa).

Residue Thr-12 participates in ADP binding. ATP contacts are provided by Thr-12, Thr-13, and Ser-14. Residue Thr-12 coordinates sn-glycerol 3-phosphate. ADP is bound at residue Arg-16. 4 residues coordinate sn-glycerol 3-phosphate: Arg-82, Glu-83, Tyr-134, and Asp-243. The glycerol site is built by Arg-82, Glu-83, Tyr-134, Asp-243, and Gln-244. 2 residues coordinate ADP: Thr-265 and Gly-308. ATP-binding residues include Thr-265, Gly-308, Gln-312, and Gly-409. Residues Gly-409 and Asn-413 each coordinate ADP.

The protein belongs to the FGGY kinase family. Homotetramer and homodimer (in equilibrium).

It catalyses the reaction glycerol + ATP = sn-glycerol 3-phosphate + ADP + H(+). It functions in the pathway polyol metabolism; glycerol degradation via glycerol kinase pathway; sn-glycerol 3-phosphate from glycerol: step 1/1. With respect to regulation, activated by phosphorylation and inhibited by fructose 1,6-bisphosphate (FBP). Functionally, key enzyme in the regulation of glycerol uptake and metabolism. Catalyzes the phosphorylation of glycerol to yield sn-glycerol 3-phosphate. The protein is Glycerol kinase of Clostridium botulinum (strain Langeland / NCTC 10281 / Type F).